The primary structure comprises 89 residues: Small ribosomal subunit protein bS20 (89 aa).

This sequence belongs to the bacterial ribosomal protein bS20 family.

Functionally, binds directly to 16S ribosomal RNA. The sequence is that of Small ribosomal subunit protein bS20 from Wolbachia sp. subsp. Drosophila simulans (strain wRi).